Consider the following 961-residue polypeptide: Leucine-rich repeat-containing protein egg-6 (961 aa).

The signal sequence occupies residues 1–18; sequence MRWLTLIAVAHLIAFLSS. At 19–854 the chain is on the extracellular side; sequence AEITCPRIPE…EQNERHRNIR (836 aa). 17 LRR repeats span residues 60 to 78, 79 to 101, 103 to 124, 125 to 148, 150 to 172, 174 to 197, 199 to 222, 223 to 245, 247 to 269, 270 to 294, 305 to 316, 317 to 339, 340 to 363, 364 to 387, 388 to 411, 413 to 435, and 437 to 455; these read IDELHILNGTDVKIESLPF, NGLRTIAILNSTLQSFSPTAWRH, EATIEHITINGNELKTVPVFGN, LSTLMSMNLNSNQISSIPDKAFNG, SALTQLRLENNAICDFPPKSLDA, KASLVLLDVSGNCLDAIPAQILRN, ANLMYLDLGSNNISEINNFELMNL, PFLRELRVQNNTLRRIHPMAFMN, PQLQYLYLQDNIISTLDGNRLQG, FKNLEVLDVSNNALYALPSLKDLPN, ITKIETLAFSNN, PNLQLISVQNNNIVQISRNSFES, LDKLVVLLVGNNSLAKIERGMFDG, MKNLQQLSIRNNTLTALDASSFAQ, LAHLTTLDLGHNKIHDIEEGTFDK, SKLFWLDLSNNKISGFKTSVFKK, and ISNILLDGNQLICDESFNE. Residues 855-875 traverse the membrane as a helical segment; sequence IITAIALAFVGAVTVVVIIFF. Residues 876 to 961 lie on the Cytoplasmic side of the membrane; that stretch reads VNYTKKQRRL…PQAVSHRSRH (86 aa). Positions 890–943 are disordered; sequence VYRSSPSSSGSSGQNAANESGRSSAAPSPIRPPLMNIPKTPNNRTMESTFGQPQ. Positions 893 to 902 are enriched in low complexity; the sequence is SSPSSSGSSG. A compositionally biased stretch (polar residues) spans 928-943; the sequence is KTPNNRTMESTFGQPQ.

As to expression, in L1 larvae, expressed in a subset of epithelial cells including epidermal, vulval and rectal cells and the excretory duct and pore. Also detected in some neurons. Absent from internal epithelia such as the gut and pharyngeal tubes.

Its subcellular location is the apical cell membrane. Its function is as follows. Required for apical extracellular matrix organization and epithelial junction maintenance. This chain is Leucine-rich repeat-containing protein egg-6, found in Caenorhabditis elegans.